Consider the following 23-residue polypeptide: Thylakoid lumenal 17.4 kDa protein (23 aa).

Positions 1 to 23 are disordered; it reads ANQRLPPLSNDPDRCERAFVGNT.

Its subcellular location is the plastid. It localises to the chloroplast thylakoid lumen. The protein is Thylakoid lumenal 17.4 kDa protein of Spinacia oleracea (Spinach).